A 473-amino-acid polypeptide reads, in one-letter code: tRNA-2-methylthio-N(6)-dimethylallyladenosine synthase (473 aa).

The MTTase N-terminal domain maps to 5–125 (RKLHIKSFGC…LPQLLAEAAR (121 aa)). Residues Cys-14, Cys-50, Cys-88, Cys-166, Cys-170, and Cys-173 each coordinate [4Fe-4S] cluster. One can recognise a Radical SAM core domain in the interval 152 to 384 (RARGISAFVT…QELIDSQQAA (233 aa)). The TRAM domain maps to 387–449 (AAVIGTTVEV…RYSLIGELAA (63 aa)). Positions 452–473 (QHSGFATRSEDSPQSLPITTGA) are disordered.

The protein belongs to the methylthiotransferase family. MiaB subfamily. In terms of assembly, monomer. Requires [4Fe-4S] cluster as cofactor.

It is found in the cytoplasm. It catalyses the reaction N(6)-dimethylallyladenosine(37) in tRNA + (sulfur carrier)-SH + AH2 + 2 S-adenosyl-L-methionine = 2-methylsulfanyl-N(6)-dimethylallyladenosine(37) in tRNA + (sulfur carrier)-H + 5'-deoxyadenosine + L-methionine + A + S-adenosyl-L-homocysteine + 2 H(+). Functionally, catalyzes the methylthiolation of N6-(dimethylallyl)adenosine (i(6)A), leading to the formation of 2-methylthio-N6-(dimethylallyl)adenosine (ms(2)i(6)A) at position 37 in tRNAs that read codons beginning with uridine. This chain is tRNA-2-methylthio-N(6)-dimethylallyladenosine synthase, found in Rhodopseudomonas palustris (strain BisB18).